The primary structure comprises 480 residues: Flap endonuclease 1 (480 aa).

The N-domain stretch occupies residues Met-1–Arg-106. Asp-34 lines the Mg(2+) pocket. Arg-47 and Arg-72 together coordinate DNA. The Mg(2+) site is built by Asp-88, Glu-160, Glu-162, Asp-181, and Asp-183. Residues Glu-124 to Tyr-266 are I-domain. Position 160 (Glu-160) interacts with DNA. Positions 244 and 246 each coordinate DNA. Residue Asp-246 participates in Mg(2+) binding. The tract at residues Thr-349–Phe-357 is interaction with PCNA. The interval Thr-379–Asp-461 is disordered. A compositionally biased stretch (basic and acidic residues) spans Asn-404–Lys-428. Residues Asp-429–Asp-438 show a composition bias toward acidic residues.

Belongs to the XPG/RAD2 endonuclease family. FEN1 subfamily. In terms of assembly, interacts with PCNA. Three molecules of FEN1 bind to one PCNA trimer with each molecule binding to one PCNA monomer. PCNA stimulates the nuclease activity without altering cleavage specificity. Mg(2+) is required as a cofactor. Phosphorylated. Phosphorylation upon DNA damage induces relocalization to the nuclear plasma.

It localises to the nucleus. The protein resides in the nucleolus. It is found in the nucleoplasm. The protein localises to the mitochondrion. With respect to regulation, inhibited by monovalent metal ions. Functionally, structure-specific nuclease with 5'-flap endonuclease and 5'-3' exonuclease activities involved in DNA replication and repair. During DNA replication, cleaves the 5'-overhanging flap structure that is generated by displacement synthesis when DNA polymerase encounters the 5'-end of a downstream Okazaki fragment. It enters the flap from the 5'-end and then tracks to cleave the flap base, leaving a nick for ligation. Also involved in the long patch base excision repair (LP-BER) pathway, by cleaving within the apurinic/apyrimidinic (AP) site-terminated flap. Acts as a genome stabilization factor that prevents flaps from equilibrating into structures that lead to duplications and deletions. Also possesses 5'-3' exonuclease activity on nicked or gapped double-stranded DNA, and exhibits RNase H activity. Also involved in replication and repair of rDNA and in repairing mitochondrial DNA. This chain is Flap endonuclease 1, found in Plasmodium yoelii yoelii.